The following is an 88-amino-acid chain: Small ribosomal subunit protein uS15 (88 aa).

Belongs to the universal ribosomal protein uS15 family. In terms of assembly, part of the 30S ribosomal subunit. Forms a bridge to the 50S subunit in the 70S ribosome, contacting the 23S rRNA.

In terms of biological role, one of the primary rRNA binding proteins, it binds directly to 16S rRNA where it helps nucleate assembly of the platform of the 30S subunit by binding and bridging several RNA helices of the 16S rRNA. Its function is as follows. Forms an intersubunit bridge (bridge B4) with the 23S rRNA of the 50S subunit in the ribosome. The polypeptide is Small ribosomal subunit protein uS15 (Mesomycoplasma hyopneumoniae (strain 232) (Mycoplasma hyopneumoniae)).